The sequence spans 342 residues: Aspartate carbamoyltransferase catalytic subunit (342 aa).

Residues Arg59 and Thr60 each contribute to the carbamoyl phosphate site. Lys87 provides a ligand contact to L-aspartate. Carbamoyl phosphate contacts are provided by Arg109, His142, and Gln145. L-aspartate-binding residues include Arg182 and Arg253. Carbamoyl phosphate contacts are provided by Gly294 and Pro295.

It belongs to the aspartate/ornithine carbamoyltransferase superfamily. ATCase family. In terms of assembly, heterododecamer (2C3:3R2) of six catalytic PyrB chains organized as two trimers (C3), and six regulatory PyrI chains organized as three dimers (R2).

It catalyses the reaction carbamoyl phosphate + L-aspartate = N-carbamoyl-L-aspartate + phosphate + H(+). It participates in pyrimidine metabolism; UMP biosynthesis via de novo pathway; (S)-dihydroorotate from bicarbonate: step 2/3. Catalyzes the condensation of carbamoyl phosphate and aspartate to form carbamoyl aspartate and inorganic phosphate, the committed step in the de novo pyrimidine nucleotide biosynthesis pathway. In Synechococcus sp. (strain WH7803), this protein is Aspartate carbamoyltransferase catalytic subunit.